The sequence spans 2963 residues: tRNA nuclease CdiA (2963 aa).

An N-terminal signal peptide occupies residues 1–29 (MIPIYLRQKLISYALIYLVAIQPIMPVMA). Residues 35–320 (AQGSTALDKA…AQGNITLNSH (286 aa)) are two-partner system transport domain (TPS). Positions 573–1074 (GNVVAQEHAQ…MVLNTASLLN (502 aa)) are FHA-1. Residues 1075–1342 (RRDGFSVTEK…KPLTRAQLSD (268 aa)) form a receptor binding domain (RBD) region. A YP domain region spans residues 1343-1528 (YPLPDSNNGL…LAKAEQAHLQ (186 aa)). The interval 1529 to 1751 (GSVISGNKVE…ATLQAERDVN (223 aa)) is periplasmic FHA-1 repeat (pFR). Residues 1759-1770 (TRNQHIDSEDKT) are compositionally biased toward basic and acidic residues. 2 disordered regions span residues 1759-1787 (TRNQ…LTAS) and 1992-2012 (SKSS…SASA). An FHA-2 region spans residues 1762 to 2314 (QHIDSEDKTT…DSDNYNSIQK (553 aa)). Positions 1771-1782 (TGYTRSTLSSGG) are enriched in polar residues. The short motif at 2694–2697 (VEDN) is the VEDN CT cleavage motif element. The interval 2694-2963 (VEDNNLSFGK…TGRVRNFHPN (270 aa)) is C-terminal effector domain (CT).

The protein in the N-terminal section; belongs to the CdiA toxin family. It in the C-terminal section; belongs to the bacterial EndoU family. In terms of assembly, forms a 1:1 complex with cognate immunity protein CdiI.

It localises to the secreted. Its subcellular location is the target cell. The protein resides in the target cell cytoplasm. In terms of biological role, toxic component of a toxin-immunity protein module, which functions as a cellular contact-dependent growth inhibition (CDI) system. CDI modules allow bacteria to communicate with and inhibit the growth of closely related neighboring bacteria in a contact-dependent fashion. Targeting of the CT domain (residues 2824-2963) in the absence of immunity protein inhibits cell growth and causes tRNA(UUC-Glu) cleavage in the anticodon loop; expression of cognate immunity protein CdiI-43969 neutralizes growth inhibition and tRNA(UUC-Glu) remains intact, whereas non-cognate immunity proteins do not confer protection from the toxic effects. Its function is as follows. The CdiA protein is thought to be exported from the cell through the central lumen of CdiB, the other half of its two-partner system (TPS). The TPS domain probably remains associated with CdiB while the FHA-1 domain forms an extended filament with the receptor-binding domain (RBD) at its extremity; in the secretion arrested state the C-terminus of the RBD and YP domains form a hairpin-like structure as the FHA-2, PT and CT domains are periplasmic. The YP domain is probably responsible for this arrest at the point where it re-enters the host cell periplasm. Upon binding to a target cell outer membrane receptor a signal is transmitted to activate secretion. The filament elongates slightly, the rest of CdiA is secreted and the FHA-2 domain becomes stably associated with the target cell's outer membrane where it facilitates entry of the toxic CT domain into the target cell periplasm. From there the toxic CT domain is cleaved and gains access to the target cell cytoplasm via an inner membrane protein. The protein is tRNA nuclease CdiA of Yersinia mollaretii (strain ATCC 43969 / DSM 18520 / CIP 103324 / CNY 7263 / WAIP 204).